Consider the following 492-residue polypeptide: N-succinylglutamate 5-semialdehyde dehydrogenase (492 aa).

220–225 (GSASTG) contacts NAD(+). Catalysis depends on residues Glu243 and Cys277.

The protein belongs to the aldehyde dehydrogenase family. AstD subfamily.

It catalyses the reaction N-succinyl-L-glutamate 5-semialdehyde + NAD(+) + H2O = N-succinyl-L-glutamate + NADH + 2 H(+). It participates in amino-acid degradation; L-arginine degradation via AST pathway; L-glutamate and succinate from L-arginine: step 4/5. In terms of biological role, catalyzes the NAD-dependent reduction of succinylglutamate semialdehyde into succinylglutamate. The chain is N-succinylglutamate 5-semialdehyde dehydrogenase from Salmonella paratyphi B (strain ATCC BAA-1250 / SPB7).